The sequence spans 126 residues: Large ribosomal subunit protein bL12 (126 aa).

Belongs to the bacterial ribosomal protein bL12 family. As to quaternary structure, homodimer. Part of the ribosomal stalk of the 50S ribosomal subunit. Forms a multimeric L10(L12)X complex, where L10 forms an elongated spine to which 2 to 4 L12 dimers bind in a sequential fashion. Binds GTP-bound translation factors.

Its function is as follows. Forms part of the ribosomal stalk which helps the ribosome interact with GTP-bound translation factors. Is thus essential for accurate translation. The sequence is that of Large ribosomal subunit protein bL12 from Rhizorhabdus wittichii (strain DSM 6014 / CCUG 31198 / JCM 15750 / NBRC 105917 / EY 4224 / RW1) (Sphingomonas wittichii).